A 285-amino-acid chain; its full sequence is MAKDIEAAAAHEGKDYSDPPPAPLVDAEELTKWSLYRAVIAEFVATLLFLYITVATVIGYKHQTDAAASGPDAACGGVGVLGIAWAFGGMIFILVYCTAGVSGGHINPAVTFGLFLARKVSLVRALLYIVAQCLGAICGVGLVKGFQSAFYVRYGGGANELSAGYSKGTGLAAEIIGTFVLVYTVFSATDPKRNARDSHVPVLAPLPIGFAVFMVHLATIPITGTGINPARSLGAAVIYNNDKAWDDHWIFWVGPFIGAAIAAAYHQYVLRASAAKLGSSASFSR.

The next 2 helical transmembrane spans lie at alanine 38 to isoleucine 58 and cysteine 75 to valine 95. An NPA 1 motif is present at residues asparagine 107–alanine 109. 3 consecutive transmembrane segments (helical) span residues leucine 126–phenylalanine 146, glycine 168–alanine 188, and valine 202–isoleucine 222. The short motif at asparagine 228–alanine 230 is the NPA 2 element. The helical transmembrane segment at isoleucine 250–leucine 270 threads the bilayer.

It belongs to the MIP/aquaporin (TC 1.A.8) family. PIP (TC 1.A.8.11) subfamily. Homomers. May interact with PIP1-2 to form heteromers. In terms of tissue distribution, specifically expressed in roots, in the exodermis, endodermis and xylem parenchyma. Polar localization to the external periclinal side of epidermal cells in root apices.

It is found in the cell membrane. Functionally, water channel required to facilitate the transport of water across cell membrane. Its function is impaired by Hg(2+). May play a role in water uptake from the root surface. Active as homomers. Increased activity when heteromerization with PIP1-2. The chain is Aquaporin PIP2-5 (PIP2-5) from Zea mays (Maize).